A 98-amino-acid polypeptide reads, in one-letter code: NADH-ubiquinone oxidoreductase chain 4L (98 aa).

3 helical membrane-spanning segments follow: residues 2–22 (PSISTNIILAFITALLGMLIF), 29–49 (SLLCLEGMMLSMFILSTLTIL), and 61–81 (ILLLVFAACEAAVGLALLVTV).

It belongs to the complex I subunit 4L family. As to quaternary structure, core subunit of respiratory chain NADH dehydrogenase (Complex I) which is composed of 45 different subunits.

It localises to the mitochondrion inner membrane. The enzyme catalyses a ubiquinone + NADH + 5 H(+)(in) = a ubiquinol + NAD(+) + 4 H(+)(out). Core subunit of the mitochondrial membrane respiratory chain NADH dehydrogenase (Complex I) which catalyzes electron transfer from NADH through the respiratory chain, using ubiquinone as an electron acceptor. Part of the enzyme membrane arm which is embedded in the lipid bilayer and involved in proton translocation. This is NADH-ubiquinone oxidoreductase chain 4L (MT-ND4L) from Eulemur mongoz (Mongoose lemur).